The sequence spans 67 residues: Light-harvesting protein B-870 alpha chain (67 aa).

At M1 the chain carries N-formylmethionine; in strain DSM 149 and DSM 151. Residues 1 to 12 (MWRIWRLFDPMR) lie on the Cytoplasmic side of the membrane. A helical transmembrane segment spans residues 13–33 (AMVAQAVFLLGLAVLIHLMLL). H29 lines the a bacteriochlorophyll pocket. Residues 34–67 (GTNKYNWLDGAKKAPAATAVAPVPAEVTSLAQAK) are Periplasmic-facing.

The protein belongs to the antenna complex alpha subunit family. As to quaternary structure, an alpha/beta heterodimer. The core complex is formed by different alpha and beta chains, binding bacteriochlorophyll molecules, and arranged most probably in tetrameric structures disposed around the reaction center. The non-pigmented gamma chains may constitute additional components. The N-terminus is blocked.

Its subcellular location is the cell inner membrane. In terms of biological role, antenna complexes are light-harvesting systems, which transfer the excitation energy to the reaction centers. This Rubrivivax gelatinosus (Rhodocyclus gelatinosus) protein is Light-harvesting protein B-870 alpha chain (pufA).